A 397-amino-acid chain; its full sequence is 2-isopropylmalate synthase 1 (397 aa).

Positions 6-268 (VIVFDTTLRD…VHGINTKEIY (263 aa)) constitute a Pyruvate carboxyltransferase domain. Residues aspartate 15, histidine 203, histidine 205, and asparagine 239 each coordinate Mn(2+).

It belongs to the alpha-IPM synthase/homocitrate synthase family. LeuA type 1 subfamily. As to quaternary structure, homodimer. Mn(2+) serves as cofactor.

Its subcellular location is the cytoplasm. It catalyses the reaction 3-methyl-2-oxobutanoate + acetyl-CoA + H2O = (2S)-2-isopropylmalate + CoA + H(+). The protein operates within amino-acid biosynthesis; L-leucine biosynthesis; L-leucine from 3-methyl-2-oxobutanoate: step 1/4. In terms of biological role, catalyzes the condensation of the acetyl group of acetyl-CoA with 3-methyl-2-oxobutanoate (2-ketoisovalerate) to form 3-carboxy-3-hydroxy-4-methylpentanoate (2-isopropylmalate). The sequence is that of 2-isopropylmalate synthase 1 from Caldanaerobacter subterraneus subsp. tengcongensis (strain DSM 15242 / JCM 11007 / NBRC 100824 / MB4) (Thermoanaerobacter tengcongensis).